Here is a 103-residue protein sequence, read N- to C-terminus: uncharacterized protein (103 aa).

3 helical membrane-spanning segments follow: residues 12-34, 49-66, and 79-101; these read GFSW…LTIS, TLMS…ALIA, and FARG…VAGG.

The protein resides in the cell membrane. This is an uncharacterized protein from Pasteurella multocida (strain Pm70).